Here is a 298-residue protein sequence, read N- to C-terminus: Tyrosine recombinase XerC (298 aa).

The Core-binding (CB) domain maps to 1–84 (MNHIQEAFLN…TLRTFYEYWM (84 aa)). The Tyr recombinase domain maps to 105-286 (YLPQFFYEEE…SNQQLRKVYL (182 aa)). Catalysis depends on residues R145, K169, H238, R241, and H264. Residue Y273 is the O-(3'-phospho-DNA)-tyrosine intermediate of the active site.

It belongs to the 'phage' integrase family. XerC subfamily. In terms of assembly, forms a cyclic heterotetrameric complex composed of two molecules of XerC and two molecules of XerD.

It is found in the cytoplasm. Functionally, site-specific tyrosine recombinase, which acts by catalyzing the cutting and rejoining of the recombining DNA molecules. The XerC-XerD complex is essential to convert dimers of the bacterial chromosome into monomers to permit their segregation at cell division. It also contributes to the segregational stability of plasmids. The sequence is that of Tyrosine recombinase XerC from Staphylococcus aureus (strain MSSA476).